A 243-amino-acid chain; its full sequence is Terpene cyclase nodB (243 aa).

Transmembrane regions (helical) follow at residues 19–39, 50–70, and 75–95; these read ISDI…AGMI, MAPL…LIYP, and IEQG…YTAI. Residue Asn-111 is glycosylated (N-linked (GlcNAc...) asparagine). 4 helical membrane passes run 112-132, 134-154, 169-189, and 205-225; these read ITLI…ALAA, IGPA…LSVG, SYTL…FAIL, and LVLW…ICLW.

This sequence belongs to the paxB family.

The protein resides in the membrane. Its pathway is secondary metabolite biosynthesis. Functionally, terpene cyclase; part of the gene cluster that mediates the biosynthesis of the indole diterpenes nodulisporic acids (NA). Nodulisporic acid A (NAA) and its chemically modified derivatives are of particular significance because of their highly potent insecticidal activity against blood-feeding arthropods and lack of observable adverse effects on mammals, in particular the tremogenicity associated with the paspaline-derived IDTs is not observed. The geranylgeranyl diphosphate (GGPP) synthase ggs1, localized outside of the cluster, is proposed to catalyze the first step in nodulisporic acid biosynthesis via conversion of farnesyl pyrophosphate and isopentyl pyrophosphate into geranylgeranyl pyrophosphate (GGPP). Condensation of indole-3-glycerol phosphate with GGPP by the prenyl transferase nodC then forms 3-geranylgeranylindole (3-GGI). Epoxidation by the FAD-dependent monooxygenase nodM leads to a single-epoxidized-GGI that is substrate of the terpene cyclase nodB for cyclization to yield emindole SB. The terminal methyl carbon, C28, of emindole SB is then oxidized by the cytochrome P450 monooxygenase nodW to produce nodulisporic acid F (NAF), the pentacyclic core of NAA. NAF is converted to nodulisporic acid E (NAE) via prenylation. This step is probably performed by one of the indole diterpene prenyltransferases nodD1 or nodD2. Several oxidation steps performed by the FAD-linked oxidoreductase nodO and one of the cytochrome P450 monooxygenase nodR, nodX or nodZ further convert NAE to nodulisporic acid D (NAD). NAD is substrate of cytochrome P450 monooxygenase nodJ to produce the precursor of nodulisporic acid C (NAC), converted to NAC by one of the indole diterpene prenyltransferases nodD1 or nodD2. The FAD-dependent monooxygenase nodY2 then oxidizes NAC to nodulisporic acid B (NAB). Finally NAB is converted to NAA by one of the cytochrome P450 monooxygenases nodR, nodX or nodZ. This chain is Terpene cyclase nodB, found in Hypoxylon pulicicidum.